Reading from the N-terminus, the 297-residue chain is uncharacterized protein (297 aa).

Helical transmembrane passes span D3–L23, V38–L58, I103–L123, and Y128–M148.

The protein resides in the cell membrane. This is an uncharacterized protein from Bacillus subtilis (strain 168).